We begin with the raw amino-acid sequence, 397 residues long: Purine ribonucleoside efflux pump NepI (397 aa).

The Cytoplasmic portion of the chain corresponds to 1–21 (MNENIAEKFRADGVARPNWSA). The chain crosses the membrane as a helical span at residues 22–42 (VFAVAFCVACLITVEFLPVSL). At 43–54 (LTPMAQDLGISE) the chain is on the periplasmic side. Residues 55–75 (GVAGQSVTVTAFVAMFSSLFI) traverse the membrane as a helical segment. Residues 76-85 (TQIIQATDRR) lie on the Cytoplasmic side of the membrane. The chain crosses the membrane as a helical span at residues 86–106 (YIVILFAVLLTASCLMVSFAN). A topological domain (periplasmic) is located at residue S107. Residues 108-128 (FTLLLLGRACLGLALGGFWAM) form a helical membrane-spanning segment. The Cytoplasmic portion of the chain corresponds to 129–147 (SASLTMRLVPARTVPKALS). Residues 148-168 (VIFGAVSIALVIAAPLGSFLG) form a helical membrane-spanning segment. The Periplasmic segment spans residues 169–175 (GIIGWRN). The chain crosses the membrane as a helical span at residues 176-196 (VFNAAAVMGVLCVIWVVKSLP). At 197–215 (SLPGEPSHQKQNMFSLLQR) the chain is on the cytoplasmic side. Residues 216–236 (PGVMAGMIAIFMSFAGQFAFF) form a helical membrane-spanning segment. Residues 237–255 (TYIRPVYMNLAGFDVDGLT) lie on the Periplasmic side of the membrane. Residues 256-276 (LVLLSFGIASFVGTSFSSYVL) traverse the membrane as a helical segment. At 277–281 (KRSVK) the chain is on the cytoplasmic side. A helical transmembrane segment spans residues 282–302 (LALAGAPLLLALSALTLIVWG). Residues 303–305 (SDK) lie on the Periplasmic side of the membrane. Residues 306–326 (TVAAAIAIIWGLAFALVPVGW) form a helical membrane-spanning segment. Over 327 to 343 (STWITRSLADQAEKAGS) the chain is Cytoplasmic. The helical transmembrane segment at 344–364 (IQVAVIQLANTCGAAVGGYAL) threads the bilayer. Residues 365 to 366 (DN) are Periplasmic-facing. Residues 367–387 (FGLLSPLALSGGLMLLTALVV) traverse the membrane as a helical segment. Residues 388-397 (AAKVRITPMS) are Cytoplasmic-facing.

It belongs to the major facilitator superfamily. DHA1 family. NepI (TC 2.A.1.2.26) subfamily.

It localises to the cell inner membrane. It catalyses the reaction inosine(in) + H(+)(out) = inosine(out) + H(+)(in). It carries out the reaction guanosine(in) + H(+)(out) = guanosine(out) + H(+)(in). Functionally, involved in the efflux of purine ribonucleosides, such as inosine and guanosine. This chain is Purine ribonucleoside efflux pump NepI, found in Salmonella choleraesuis (strain SC-B67).